Here is a 532-residue protein sequence, read N- to C-terminus: Light-independent protochlorophyllide reductase subunit B (532 aa).

D36 contacts [4Fe-4S] cluster. D318 serves as the catalytic Proton donor. 453 to 454 contributes to the substrate binding site; that stretch reads GM.

Belongs to the ChlB/BchB/BchZ family. As to quaternary structure, protochlorophyllide reductase is composed of three subunits; ChlL, ChlN and ChlB. Forms a heterotetramer of two ChlB and two ChlN subunits. [4Fe-4S] cluster serves as cofactor.

Its subcellular location is the plastid. The protein localises to the chloroplast. The enzyme catalyses chlorophyllide a + oxidized 2[4Fe-4S]-[ferredoxin] + 2 ADP + 2 phosphate = protochlorophyllide a + reduced 2[4Fe-4S]-[ferredoxin] + 2 ATP + 2 H2O. It functions in the pathway porphyrin-containing compound metabolism; chlorophyll biosynthesis (light-independent). Its function is as follows. Component of the dark-operative protochlorophyllide reductase (DPOR) that uses Mg-ATP and reduced ferredoxin to reduce ring D of protochlorophyllide (Pchlide) to form chlorophyllide a (Chlide). This reaction is light-independent. The NB-protein (ChlN-ChlB) is the catalytic component of the complex. The protein is Light-independent protochlorophyllide reductase subunit B of Tetradesmus obliquus (Green alga).